We begin with the raw amino-acid sequence, 433 residues long: D-amino acid dehydrogenase (433 aa).

FAD is bound at residue valine 3–tryptophan 17.

The protein belongs to the DadA oxidoreductase family. Requires FAD as cofactor.

It carries out the reaction a D-alpha-amino acid + A + H2O = a 2-oxocarboxylate + AH2 + NH4(+). Its pathway is amino-acid degradation; D-alanine degradation; NH(3) and pyruvate from D-alanine: step 1/1. Oxidative deamination of D-amino acids. The polypeptide is D-amino acid dehydrogenase (Erwinia tasmaniensis (strain DSM 17950 / CFBP 7177 / CIP 109463 / NCPPB 4357 / Et1/99)).